Reading from the N-terminus, the 263-residue chain is Small ribosomal subunit protein uS2 (263 aa).

The protein belongs to the universal ribosomal protein uS2 family.

This Hyphomonas neptunium (strain ATCC 15444) protein is Small ribosomal subunit protein uS2.